A 590-amino-acid chain; its full sequence is Histone-binding protein N1/N2 (590 aa).

The interval M1–I30 is disordered. Residues A36–Q69 form a TPR 1 repeat. The disordered stretch occupies residues A102–G328. Residues M106–P120 are compositionally biased toward acidic residues. Composition is skewed to basic and acidic residues over residues L128 to E250 and A262 to E275. Positions E293–V327 are enriched in acidic residues. TPR repeat units lie at residues A357–H390 and A399–R432. Positions G492–A590 are disordered. Positions G496–S525 are enriched in polar residues. The Nuclear localization signal motif lies at V531–T537. The segment covering K536–Q553 has biased composition (basic and acidic residues).

It belongs to the NASP family.

It localises to the nucleus. Functionally, this protein is involved in nucleosome assembly. It is bound to H3 and H4 in the absence of DNA, but released from H3 and H4 in the presence of DNA. This is Histone-binding protein N1/N2 from Xenopus laevis (African clawed frog).